Reading from the N-terminus, the 479-residue chain is Aspartyl/glutamyl-tRNA(Asn/Gln) amidotransferase subunit B (479 aa).

The protein belongs to the GatB/GatE family. GatB subfamily. Heterotrimer of A, B and C subunits.

The catalysed reaction is L-glutamyl-tRNA(Gln) + L-glutamine + ATP + H2O = L-glutaminyl-tRNA(Gln) + L-glutamate + ADP + phosphate + H(+). It catalyses the reaction L-aspartyl-tRNA(Asn) + L-glutamine + ATP + H2O = L-asparaginyl-tRNA(Asn) + L-glutamate + ADP + phosphate + 2 H(+). Its function is as follows. Allows the formation of correctly charged Asn-tRNA(Asn) or Gln-tRNA(Gln) through the transamidation of misacylated Asp-tRNA(Asn) or Glu-tRNA(Gln) in organisms which lack either or both of asparaginyl-tRNA or glutaminyl-tRNA synthetases. The reaction takes place in the presence of glutamine and ATP through an activated phospho-Asp-tRNA(Asn) or phospho-Glu-tRNA(Gln). The chain is Aspartyl/glutamyl-tRNA(Asn/Gln) amidotransferase subunit B from Streptococcus pyogenes serotype M5 (strain Manfredo).